The chain runs to 395 residues: Flap endonuclease 1 (395 aa).

An N-domain region spans residues 1–104 (MGIKQLFQII…GELAKRFQRK (104 aa)). Mg(2+) is bound at residue aspartate 34. The DNA site is built by arginine 47 and arginine 70. Aspartate 86, glutamate 158, glutamate 160, aspartate 179, and aspartate 181 together coordinate Mg(2+). The interval 122-253 (DIEKFSRRTV…TTALKLIRDH (132 aa)) is I-domain. Glutamate 158 serves as a coordination point for DNA. 2 residues coordinate DNA: glycine 231 and aspartate 233. Aspartate 233 is a binding site for Mg(2+). The interval 341-349 (QQARLEGFF) is interaction with PCNA. The segment at 344–395 (RLEGFFKPVPKTDAQKAAHKRKLEEKNEEKKKKLKQEKKDKAAAKSKPRGAA) is disordered. Residues 365–386 (KLEEKNEEKKKKLKQEKKDKAA) show a composition bias toward basic and acidic residues.

This sequence belongs to the XPG/RAD2 endonuclease family. FEN1 subfamily. In terms of assembly, interacts with PCNA. Three molecules of FEN1 bind to one PCNA trimer with each molecule binding to one PCNA monomer. PCNA stimulates the nuclease activity without altering cleavage specificity. It depends on Mg(2+) as a cofactor. In terms of processing, phosphorylated. Phosphorylation upon DNA damage induces relocalization to the nuclear plasma.

It localises to the nucleus. The protein localises to the nucleolus. The protein resides in the nucleoplasm. Its subcellular location is the mitochondrion. Structure-specific nuclease with 5'-flap endonuclease and 5'-3' exonuclease activities involved in DNA replication and repair. During DNA replication, cleaves the 5'-overhanging flap structure that is generated by displacement synthesis when DNA polymerase encounters the 5'-end of a downstream Okazaki fragment. It enters the flap from the 5'-end and then tracks to cleave the flap base, leaving a nick for ligation. Also involved in the long patch base excision repair (LP-BER) pathway, by cleaving within the apurinic/apyrimidinic (AP) site-terminated flap. Acts as a genome stabilization factor that prevents flaps from equilibrating into structures that lead to duplications and deletions. Also possesses 5'-3' exonuclease activity on nicked or gapped double-stranded DNA, and exhibits RNase H activity. Also involved in replication and repair of rDNA and in repairing mitochondrial DNA. The protein is Flap endonuclease 1 of Fusarium vanettenii (strain ATCC MYA-4622 / CBS 123669 / FGSC 9596 / NRRL 45880 / 77-13-4) (Fusarium solani subsp. pisi).